Consider the following 160-residue polypeptide: UPF0225 protein CGSHiEE_01665 (160 aa).

This sequence belongs to the UPF0225 family.

The chain is UPF0225 protein CGSHiEE_01665 from Haemophilus influenzae (strain PittEE).